The chain runs to 168 residues: Ribosome-binding factor A (168 aa).

Residues 125–138 are compositionally biased toward basic and acidic residues; sequence RVREGAKHAGDSDP. The interval 125–168 is disordered; the sequence is RVREGAKHAGDSDPYRVLGEGDLEGPATGGPDVEDEGGANSHDR.

The protein belongs to the RbfA family. In terms of assembly, monomer. Binds 30S ribosomal subunits, but not 50S ribosomal subunits or 70S ribosomes.

The protein resides in the cytoplasm. Its function is as follows. One of several proteins that assist in the late maturation steps of the functional core of the 30S ribosomal subunit. Associates with free 30S ribosomal subunits (but not with 30S subunits that are part of 70S ribosomes or polysomes). Required for efficient processing of 16S rRNA. May interact with the 5'-terminal helix region of 16S rRNA. The protein is Ribosome-binding factor A of Mycolicibacterium gilvum (strain PYR-GCK) (Mycobacterium gilvum (strain PYR-GCK)).